A 411-amino-acid polypeptide reads, in one-letter code: Imidazolonepropionase (411 aa).

His75 and His77 together coordinate Fe(3+). 2 residues coordinate Zn(2+): His75 and His77. 4-imidazolone-5-propanoate-binding residues include Arg84, Tyr147, and His180. Tyr147 contacts N-formimidoyl-L-glutamate. Residue His245 coordinates Fe(3+). His245 contributes to the Zn(2+) binding site. Gln248 is a binding site for 4-imidazolone-5-propanoate. Asp320 contacts Fe(3+). Asp320 contacts Zn(2+). Asn322 and Gly324 together coordinate N-formimidoyl-L-glutamate. 4-imidazolone-5-propanoate is bound at residue Thr325.

The protein belongs to the metallo-dependent hydrolases superfamily. HutI family. Zn(2+) is required as a cofactor. The cofactor is Fe(3+).

It localises to the cytoplasm. The enzyme catalyses 4-imidazolone-5-propanoate + H2O = N-formimidoyl-L-glutamate. Its pathway is amino-acid degradation; L-histidine degradation into L-glutamate; N-formimidoyl-L-glutamate from L-histidine: step 3/3. Functionally, catalyzes the hydrolytic cleavage of the carbon-nitrogen bond in imidazolone-5-propanoate to yield N-formimidoyl-L-glutamate. It is the third step in the universal histidine degradation pathway. This Aeromonas salmonicida (strain A449) protein is Imidazolonepropionase.